Here is a 274-residue protein sequence, read N- to C-terminus: Undecaprenyl-diphosphatase (274 aa).

The next 8 helical transmembrane spans lie at methionine 1 to isoleucine 21, valine 42 to tyrosine 62, leucine 81 to aspartate 101, leucine 107 to leucine 127, isoleucine 142 to glycine 162, threonine 184 to isoleucine 204, isoleucine 213 to isoleucine 233, and phenylalanine 248 to leucine 268.

Belongs to the UppP family.

The protein localises to the cell membrane. The enzyme catalyses di-trans,octa-cis-undecaprenyl diphosphate + H2O = di-trans,octa-cis-undecaprenyl phosphate + phosphate + H(+). Functionally, catalyzes the dephosphorylation of undecaprenyl diphosphate (UPP). Confers resistance to bacitracin. The chain is Undecaprenyl-diphosphatase from Deinococcus radiodurans (strain ATCC 13939 / DSM 20539 / JCM 16871 / CCUG 27074 / LMG 4051 / NBRC 15346 / NCIMB 9279 / VKM B-1422 / R1).